Here is a 309-residue protein sequence, read N- to C-terminus: Tagatose-6-phosphate kinase (309 aa).

It belongs to the carbohydrate kinase PfkB family. LacC subfamily.

It catalyses the reaction D-tagatofuranose 6-phosphate + ATP = D-tagatofuranose 1,6-bisphosphate + ADP + H(+). It functions in the pathway carbohydrate metabolism; D-tagatose 6-phosphate degradation; D-glyceraldehyde 3-phosphate and glycerone phosphate from D-tagatose 6-phosphate: step 1/2. This is Tagatose-6-phosphate kinase from Streptococcus pyogenes serotype M6 (strain ATCC BAA-946 / MGAS10394).